Reading from the N-terminus, the 567-residue chain is Glucose-6-phosphate isomerase, cytosolic A (567 aa).

D-glucose 6-phosphate is bound by residues 156-157 (GS), 212-217 (SKTFTT), glutamine 356, glutamate 360, histidine 391, and lysine 516. Glutamate 360 functions as the Proton donor in the catalytic mechanism. Active-site residues include histidine 391 and lysine 516.

This sequence belongs to the GPI family. As to quaternary structure, homodimer.

It localises to the cytoplasm. It catalyses the reaction alpha-D-glucose 6-phosphate = beta-D-fructose 6-phosphate. The protein operates within carbohydrate degradation; glycolysis; D-glyceraldehyde 3-phosphate and glycerone phosphate from D-glucose: step 2/4. Catalyzes the conversion of glucose-6-phosphate to fructose-6-phosphate, the second step in glycolysis, and the reverse reaction during gluconeogenesis. The chain is Glucose-6-phosphate isomerase, cytosolic A from Oryza sativa subsp. japonica (Rice).